The chain runs to 497 residues: 3-octaprenyl-4-hydroxybenzoate carboxy-lyase (497 aa).

Mn(2+) is bound at residue Asn-175. Prenylated FMN-binding positions include 178 to 180, 192 to 194, and 197 to 198; these read IYR, RWL, and RG. A Mn(2+)-binding site is contributed by Glu-241. Catalysis depends on Asp-290, which acts as the Proton donor.

The protein belongs to the UbiD family. In terms of assembly, homohexamer. Prenylated FMN serves as cofactor. Mn(2+) is required as a cofactor.

It is found in the cell membrane. The enzyme catalyses a 4-hydroxy-3-(all-trans-polyprenyl)benzoate + H(+) = a 2-(all-trans-polyprenyl)phenol + CO2. The protein operates within cofactor biosynthesis; ubiquinone biosynthesis. Catalyzes the decarboxylation of 3-octaprenyl-4-hydroxy benzoate to 2-octaprenylphenol, an intermediate step in ubiquinone biosynthesis. This chain is 3-octaprenyl-4-hydroxybenzoate carboxy-lyase, found in Shigella flexneri.